Here is a 407-residue protein sequence, read N- to C-terminus: Pyridinium-3,5-bisthiocarboxylic acid mononucleotide nickel insertion protein (407 aa).

The protein belongs to the LarC family.

It catalyses the reaction Ni(II)-pyridinium-3,5-bisthiocarboxylate mononucleotide = pyridinium-3,5-bisthiocarboxylate mononucleotide + Ni(2+). Its function is as follows. Involved in the biosynthesis of a nickel-pincer cofactor ((SCS)Ni(II) pincer complex). Binds Ni(2+), and functions in nickel delivery to pyridinium-3,5-bisthiocarboxylic acid mononucleotide (P2TMN), to form the mature cofactor. Is thus probably required for the activation of nickel-pincer cofactor-dependent enzymes. This chain is Pyridinium-3,5-bisthiocarboxylic acid mononucleotide nickel insertion protein, found in Acetivibrio thermocellus (strain ATCC 27405 / DSM 1237 / JCM 9322 / NBRC 103400 / NCIMB 10682 / NRRL B-4536 / VPI 7372) (Clostridium thermocellum).